The following is a 211-amino-acid chain: Protein U63 (211 aa).

Belongs to the herpesviridae UL92 family.

The sequence is that of Protein U63 (U63) from Human herpesvirus 7 (strain JI) (HHV-7).